Here is a 1174-residue protein sequence, read N- to C-terminus: Protein kinase C-like (1174 aa).

The REM-1 1 domain occupies 1 to 68; the sequence is MANVEETVAN…LRDLDLQRTT (68 aa). Over residues 69-84 the composition is skewed to polar residues; sequence SGVDNMSLQPGRSPTN. Residues 69–140 are disordered; it reads SGVDNMSLQP…PPPATANKRP (72 aa). The segment covering 96–123 has biased composition (low complexity); that stretch reads GYAQQDQGGYGGPQSQYSQLSGGEALQP. Pro residues predominate over residues 124 to 134; it reads PRAPFAAPPPA. Residues 149–226 enclose the REM-1 2 domain; it reads KYDTPHLGPR…LKRYEDLHVD (78 aa). In terms of domain architecture, C2 spans 229-349; it reads GDGDDNDSLD…MRRKKLETEL (121 aa). The disordered stretch occupies residues 358–406; it reads DKMGGHTGIQPDMQFQPPPGQSPAGGPGGGPTPAGVRPPGAPQPQTGPI. Over residues 380–389 the composition is skewed to gly residues; that stretch reads PAGGPGGGPT. Phorbol-ester/DAG-type zinc fingers lie at residues 458 to 506 and 526 to 576; these read GHKF…VTKC and PHRF…PDFC. The interval 593–842 is disordered; sequence TRRGQSSSGP…PAANTQGTGK (250 aa). Residues 596 to 611 are compositionally biased toward polar residues; it reads GQSSSGPGMSQRTLRP. Residues 624 to 636 show a composition bias toward low complexity; that stretch reads QSPGQPGQESPTQ. Residues 648-657 are compositionally biased toward pro residues; the sequence is SPPPGPPRQP. A compositionally biased stretch (low complexity) spans 658–709; the sequence is SYPSSATSVDAARASYSTTGTASTGAPTSPTSGSRPPSGPRTQSSVAAAAAA. A compositionally biased stretch (polar residues) spans 720–744; the sequence is RSNTDYSPQSGRSSGSGYPTEQRMS. Residues 786 to 802 are compositionally biased toward pro residues; sequence LPQPPPPQSPPQHPQQP. The segment covering 808–820 has biased composition (polar residues); it reads KMPEQQALTQQPP. One can recognise a Protein kinase domain in the interval 849–1108; it reads FNFLAVLGKG…AQEIMSHAFF (260 aa). Residues 855-863 and Lys-878 each bind ATP; that span reads LGKGNFGKV. The active-site Proton acceptor is Asp-974. The region spanning 1109-1174 is the AGC-kinase C-terminal domain; the sequence is RNINWDDIYH…RGFSYSADFA (66 aa).

The protein belongs to the protein kinase superfamily. AGC Ser/Thr protein kinase family. PKC subfamily.

It carries out the reaction L-seryl-[protein] + ATP = O-phospho-L-seryl-[protein] + ADP + H(+). The enzyme catalyses L-threonyl-[protein] + ATP = O-phospho-L-threonyl-[protein] + ADP + H(+). The chain is Protein kinase C-like (PKC1) from Cochliobolus heterostrophus (Southern corn leaf blight fungus).